The following is a 679-amino-acid chain: uncharacterized protein (679 aa).

12 consecutive transmembrane segments (helical) span residues 23 to 41 (YALR…AYYL), 46 to 65 (PYWA…GGVI), 72 to 90 (IAGS…GHTL), 94 to 113 (WLFL…ACAH), 120 to 142 (YAFQ…IVEI), 157 to 179 (IVGI…GTAL), 362 to 381 (WSGV…SIGA), 385 to 404 (SGPG…SIVA), 411 to 433 (SLLM…GLMV), 438 to 455 (LWQF…MQLL), 462 to 481 (LAGL…AVTN), and 496 to 515 (AKIV…RPGS).

The protein belongs to the aromatic acid exporter ArAE (TC 2.A.85) family.

The protein localises to the cell membrane. This is an uncharacterized protein from Salmonella typhimurium (strain LT2 / SGSC1412 / ATCC 700720).